A 554-amino-acid polypeptide reads, in one-letter code: Malate synthase 2 (554 aa).

Catalysis depends on R177, which acts as the Proton acceptor. D457 serves as the catalytic Proton donor. The short motif at S552–L554 is the SKL peroxisome targeting motif element.

This sequence belongs to the malate synthase family. In terms of assembly, interacts with PEX9.

The protein localises to the peroxisome matrix. It catalyses the reaction glyoxylate + acetyl-CoA + H2O = (S)-malate + CoA + H(+). In terms of biological role, allantoin metabolism-specific malate synthase involved in the recycling the glyoxylate generated during allantoin degradation by the ureidoglycollate (UG) hydrolase reaction. This Saccharomyces cerevisiae (strain ATCC 204508 / S288c) (Baker's yeast) protein is Malate synthase 2.